A 342-amino-acid polypeptide reads, in one-letter code: Heat-inducible transcription repressor HrcA (342 aa).

Belongs to the HrcA family.

Functionally, negative regulator of class I heat shock genes (grpE-dnaK-dnaJ and groELS operons). Prevents heat-shock induction of these operons. The polypeptide is Heat-inducible transcription repressor HrcA (Dechloromonas aromatica (strain RCB)).